The chain runs to 633 residues: Micronuclear linker histone polyprotein (633 aa).

2 DNA-binding regions (HMG box) span residues 12–74 and 96–164; these read PPKK…LFHY and PKKP…KKWN. A disordered region spans residues 170 to 633; that stretch reads AAQKKQTKRK…AYGKKANKKQ (464 aa). A compositionally biased stretch (basic residues) spans 174-190; it reads KQTKRKNSTSKSRRSSS. 2 stretches are compositionally biased toward low complexity: residues 212–224 and 253–271; these read SSAS…SSSS and NSTS…SSSS. Basic residues-rich tracts occupy residues 272–309 and 330–352; these read KNKK…RKSS and SNKR…RKSS. 2 stretches are compositionally biased toward basic and acidic residues: residues 353–374 and 382–401; these read KSQE…EGQK and AKRD…EART. Over residues 406–416 the composition is skewed to low complexity; it reads NKSASKASKSG. The span at 417-444 shows a compositional bias: basic residues; the sequence is SKSKGKSASKSKGKSSSKGKNSKSRSAS. The segment covering 446–469 has biased composition (polar residues); it reads PKSNAAQNSNNTHQTADSSENASS. Basic and acidic residues predominate over residues 478 to 491; it reads RQREQKDMVNEKSN. The segment covering 496 to 524 has biased composition (basic residues); the sequence is SKGKKNSKSNTRSKSKSKSASKSRKNASK. Basic and acidic residues-rich tracts occupy residues 540–550 and 559–612; these read SRSESKSKSEA and EVIE…EDSK.

Post-translationally, all four histones are processed from the precursor molecule. In terms of processing, phosphorylated in growing and dividing cells but not in nongrowing (starved) cells. The N-terminus of MIC LH-alpha and MIC LH-delta is blocked.

The protein localises to the nucleus. Its subcellular location is the chromosome. The polypeptide is Micronuclear linker histone polyprotein (MLH) (Tetrahymena thermophila (strain SB210)).